Consider the following 92-residue polypeptide: Small ribosomal subunit protein uS19c (92 aa).

The protein belongs to the universal ribosomal protein uS19 family.

The protein localises to the plastid. Its subcellular location is the chloroplast. Functionally, protein S19 forms a complex with S13 that binds strongly to the 16S ribosomal RNA. This is Small ribosomal subunit protein uS19c from Acorus calamus (Sweet flag).